The chain runs to 2021 residues: Outer membrane protein A (2021 aa).

The first 38 residues, 1 to 38 (MANISPKLFQKAIQQGLKAALFTTSTAAIMLSSSGALG), serve as a signal peptide directing secretion. Residues 1734 to 2021 (DMDAKFGAWI…QGSVKVRVNF (288 aa)) enclose the Autotransporter domain.

Belongs to the rickettsiae OmpA/OmpB family. Post-translationally, glycosylated.

The protein resides in the periplasm. The protein localises to the secreted. Its subcellular location is the cell surface. It localises to the cell outer membrane. Its function is as follows. Elicits protective immunity. This chain is Outer membrane protein A (ompA), found in Rickettsia conorii (strain ATCC VR-613 / Malish 7).